The chain runs to 281 residues: Cis-2,3-dihydrobiphenyl-2,3-diol dehydrogenase (281 aa).

10 to 34 (ITGGASGLGRALVDRFVAEGARVAV) provides a ligand contact to NAD(+). Ser142 provides a ligand contact to substrate. Catalysis depends on Tyr155, which acts as the Proton acceptor.

It belongs to the short-chain dehydrogenases/reductases (SDR) family. As to quaternary structure, homotetramer.

It carries out the reaction (2R,3S)-3-phenylcyclohexa-3,5-diene-1,2-diol + NAD(+) = biphenyl-2,3-diol + NADH + H(+). The protein operates within xenobiotic degradation; biphenyl degradation; 2-hydroxy-2,4-pentadienoate and benzoate from biphenyl: step 2/4. The chain is Cis-2,3-dihydrobiphenyl-2,3-diol dehydrogenase (bphB) from Comamonas testosteroni (Pseudomonas testosteroni).